We begin with the raw amino-acid sequence, 286 residues long: Polyamine aminopropyltransferase (286 aa).

Positions 5–238 (KIWHEKLHRH…GTMMFSWGTD (234 aa)) constitute a PABS domain. Residues His64 and Asp88 each coordinate spermidine. S-methyl-5'-thioadenosine is bound by residues Glu108 and 140 to 141 (NG). Catalysis depends on Asp158, which acts as the Proton acceptor. Position 158 to 161 (158 to 161 (DSTD)) interacts with spermidine.

Belongs to the spermidine/spermine synthase family. Homodimer or homotetramer.

It localises to the cytoplasm. It catalyses the reaction S-adenosyl 3-(methylsulfanyl)propylamine + putrescine = S-methyl-5'-thioadenosine + spermidine + H(+). It functions in the pathway amine and polyamine biosynthesis; spermidine biosynthesis; spermidine from putrescine: step 1/1. Catalyzes the irreversible transfer of a propylamine group from the amino donor S-adenosylmethioninamine (decarboxy-AdoMet) to putrescine (1,4-diaminobutane) to yield spermidine. The polypeptide is Polyamine aminopropyltransferase (Buchnera aphidicola subsp. Schizaphis graminum (strain Sg)).